Here is a 277-residue protein sequence, read N- to C-terminus: uncharacterized protein (277 aa).

7 helical membrane passes run 23-43 (CIGGLMSAIVGAMSGVTTAFI), 61-81 (FLIYFGIIFIIGLIVSAIIGG), 117-137 (LVLLNIIFYFIPAILFVFGIF), 144-164 (IIGAFLIIISILIFIISVISL), 197-217 (YIILVIIIAIINFIISLIVVL), 221-241 (IIDIFISYSALANSILTIIYI), and 243-263 (IKGISYALSTFVDFYLGVFSI).

It to M.jannaschii MJ1189.

It localises to the cell membrane. This is an uncharacterized protein from Methanocaldococcus jannaschii (strain ATCC 43067 / DSM 2661 / JAL-1 / JCM 10045 / NBRC 100440) (Methanococcus jannaschii).